The sequence spans 261 residues: Cytochrome c oxidase subunit 3 (261 aa).

The Mitochondrial matrix segment spans residues 1 to 15 (MAHQAHAYHMVDPSP). Residues 16 to 34 (WPLTGAVAALLMSSGLAIW) form a helical membrane-spanning segment. Residues 35–40 (FHLHSM) lie on the Mitochondrial intermembrane side of the membrane. A helical transmembrane segment spans residues 41–66 (TLIVLGMILLILTMIQWWRDIIREGT). At 67–72 (FQGHHT) the chain is on the mitochondrial matrix side. The helical transmembrane segment at 73–105 (PPVQKGLRYGMILFITSEVFFFLGFFWAFYHSS) threads the bilayer. Residues 106-128 (LAPTPELGGCWPPTGLTTLDPFE) lie on the Mitochondrial intermembrane side of the membrane. A helical transmembrane segment spans residues 129–152 (VPLLNTAVLLASGVTVTWAHHSLM). The Mitochondrial matrix portion of the chain corresponds to 153-155 (EGE). Residues 156–183 (RKQAIQSLALTILLGLYFTALQAMEYYE) traverse the membrane as a helical segment. At 184–190 (APFTIAD) the chain is on the mitochondrial intermembrane side. Residues 191-223 (GVYGSTFFVATGFHGLHVIIGSTFLAVCLLRQV) form a helical membrane-spanning segment. At 224 to 232 (LFHFTSDHH) the chain is on the mitochondrial matrix side. The helical transmembrane segment at 233–256 (FGFEAAAWYWHFVDVVWLFLYVSI) threads the bilayer. Over 257–261 (YWWGS) the chain is Mitochondrial intermembrane.

Belongs to the cytochrome c oxidase subunit 3 family. As to quaternary structure, component of the cytochrome c oxidase (complex IV, CIV), a multisubunit enzyme composed of 14 subunits. The complex is composed of a catalytic core of 3 subunits MT-CO1, MT-CO2 and MT-CO3, encoded in the mitochondrial DNA, and 11 supernumerary subunits COX4I, COX5A, COX5B, COX6A, COX6B, COX6C, COX7A, COX7B, COX7C, COX8 and NDUFA4, which are encoded in the nuclear genome. The complex exists as a monomer or a dimer and forms supercomplexes (SCs) in the inner mitochondrial membrane with NADH-ubiquinone oxidoreductase (complex I, CI) and ubiquinol-cytochrome c oxidoreductase (cytochrome b-c1 complex, complex III, CIII), resulting in different assemblies (supercomplex SCI(1)III(2)IV(1) and megacomplex MCI(2)III(2)IV(2)).

Its subcellular location is the mitochondrion inner membrane. It carries out the reaction 4 Fe(II)-[cytochrome c] + O2 + 8 H(+)(in) = 4 Fe(III)-[cytochrome c] + 2 H2O + 4 H(+)(out). Its function is as follows. Component of the cytochrome c oxidase, the last enzyme in the mitochondrial electron transport chain which drives oxidative phosphorylation. The respiratory chain contains 3 multisubunit complexes succinate dehydrogenase (complex II, CII), ubiquinol-cytochrome c oxidoreductase (cytochrome b-c1 complex, complex III, CIII) and cytochrome c oxidase (complex IV, CIV), that cooperate to transfer electrons derived from NADH and succinate to molecular oxygen, creating an electrochemical gradient over the inner membrane that drives transmembrane transport and the ATP synthase. Cytochrome c oxidase is the component of the respiratory chain that catalyzes the reduction of oxygen to water. Electrons originating from reduced cytochrome c in the intermembrane space (IMS) are transferred via the dinuclear copper A center (CU(A)) of subunit 2 and heme A of subunit 1 to the active site in subunit 1, a binuclear center (BNC) formed by heme A3 and copper B (CU(B)). The BNC reduces molecular oxygen to 2 water molecules using 4 electrons from cytochrome c in the IMS and 4 protons from the mitochondrial matrix. This Danio rerio (Zebrafish) protein is Cytochrome c oxidase subunit 3 (mt-co3).